The sequence spans 180 residues: CASP-like protein 2D1 (180 aa).

At 1 to 7 (MAASGLK) the chain is on the cytoplasmic side. Residues 8 to 28 (VPEMALRVCVVPLALASLWEM) form a helical membrane-spanning segment. Topologically, residues 29 to 48 (ATNAQADDTYGEVKFSDLSG) are extracellular. A helical transmembrane segment spans residues 49–69 (FSYLVGVNAVTAAYALVSILL). Residues 70–79 (SSLKPLARYD) are Cytoplasmic-facing. Residues 80-100 (WVILVMDQASAYLLVTSASAA) traverse the membrane as a helical segment. Residues 101 to 129 (AELLQLARRGDREVSWGEVCSYFGRFCGK) lie on the Extracellular side of the membrane. Residues 130 to 150 (ATVSLALHAAALACFVALALV) traverse the membrane as a helical segment. Residues 151-180 (SAFRVLSTTGSSCHPPKHAQAQEHEQGRYN) lie on the Cytoplasmic side of the membrane. The tract at residues 161–180 (SSCHPPKHAQAQEHEQGRYN) is disordered. Positions 170-180 (QAQEHEQGRYN) are enriched in basic and acidic residues.

The protein belongs to the Casparian strip membrane proteins (CASP) family. As to quaternary structure, homodimer and heterodimers.

It is found in the cell membrane. This chain is CASP-like protein 2D1, found in Sorghum bicolor (Sorghum).